We begin with the raw amino-acid sequence, 134 residues long: Submaxillary gland androgen-regulated protein 3A (134 aa).

The first 22 residues, 1–22 (MKSLTWILGLWALAACFTPGES), serve as a signal peptide directing secretion. The tract at residues 19-134 (PGESQRGPRG…TDPALPTPAP (116 aa)) is disordered. 3 stretches are compositionally biased toward pro residues: residues 28 to 43 (GPYP…PPCF), 50 to 85 (VPPP…PPYG), and 94 to 119 (LPPP…PPFF).

It belongs to the PROL1/PROL3 family.

It localises to the secreted. Functionally, may play a role in protection or detoxification. The chain is Submaxillary gland androgen-regulated protein 3A (SMR3A) from Homo sapiens (Human).